An 86-amino-acid polypeptide reads, in one-letter code: Exodeoxyribonuclease 7 small subunit (86 aa).

Residues 67-86 (RVSPASGGATEAPAPAERDR) are disordered.

The protein belongs to the XseB family. As to quaternary structure, heterooligomer composed of large and small subunits.

The protein localises to the cytoplasm. The catalysed reaction is Exonucleolytic cleavage in either 5'- to 3'- or 3'- to 5'-direction to yield nucleoside 5'-phosphates.. Bidirectionally degrades single-stranded DNA into large acid-insoluble oligonucleotides, which are then degraded further into small acid-soluble oligonucleotides. The protein is Exodeoxyribonuclease 7 small subunit of Beutenbergia cavernae (strain ATCC BAA-8 / DSM 12333 / CCUG 43141 / JCM 11478 / NBRC 16432 / NCIMB 13614 / HKI 0122).